Reading from the N-terminus, the 151-residue chain is Protein InSETG-4 (151 aa).

The protein localises to the cytoplasm. It localises to the cytosol. The chain is Protein InSETG-4 (InSet4-G) from Homo sapiens (Human).